We begin with the raw amino-acid sequence, 235 residues long: MHLLIPAAGSGKRMGAAVNKLLLPLLGQPILAWTLQAADRASSIEWIGILSQPGDWPAIEQILAAMDLSTPVQLLQGGATRQESVYRGVEYLYNLGTVERVLIHDGARCLATPKLFDRCSAALQQVDGLIAGIPVKDTIKVTETGPKGIQIQSTPERSRLWAAQTPQGFRLSLLWQAHREALAQGWQVTDDAALFEKLGWPVYIVEGEESNLKLTTPWDLVLAEQILQQRLELAR.

It belongs to the IspD/TarI cytidylyltransferase family. IspD subfamily.

The enzyme catalyses 2-C-methyl-D-erythritol 4-phosphate + CTP + H(+) = 4-CDP-2-C-methyl-D-erythritol + diphosphate. Its pathway is isoprenoid biosynthesis; isopentenyl diphosphate biosynthesis via DXP pathway; isopentenyl diphosphate from 1-deoxy-D-xylulose 5-phosphate: step 2/6. Functionally, catalyzes the formation of 4-diphosphocytidyl-2-C-methyl-D-erythritol from CTP and 2-C-methyl-D-erythritol 4-phosphate (MEP). In Synechococcus sp. (strain JA-3-3Ab) (Cyanobacteria bacterium Yellowstone A-Prime), this protein is 2-C-methyl-D-erythritol 4-phosphate cytidylyltransferase.